A 263-amino-acid chain; its full sequence is Taurine import ATP-binding protein TauB (263 aa).

Residues 4–235 (LTAEAISLSF…RYAAGETVRS (232 aa)) enclose the ABC transporter domain. 40-47 (GPSGCGKS) serves as a coordination point for ATP.

It belongs to the ABC transporter superfamily. Taurine importer (TC 3.A.1.17.1) family. In terms of assembly, the complex is composed of two ATP-binding proteins (TauB), two transmembrane proteins (TauC) and a solute-binding protein (TauA).

It localises to the cell inner membrane. It carries out the reaction taurine(out) + ATP + H2O = taurine(in) + ADP + phosphate + H(+). Functionally, part of the ABC transporter complex TauABC involved in taurine import. Responsible for energy coupling to the transport system. This Pseudomonas aeruginosa (strain UCBPP-PA14) protein is Taurine import ATP-binding protein TauB.